Reading from the N-terminus, the 1207-residue chain is DNA-directed RNA polymerase subunit beta' (1207 aa).

Zn(2+) is bound by residues Cys60, Cys62, Cys75, and Cys78. Residues Asp450, Asp452, and Asp454 each coordinate Mg(2+). Zn(2+) is bound by residues Cys818, Cys892, Cys899, and Cys902.

It belongs to the RNA polymerase beta' chain family. As to quaternary structure, the RNAP catalytic core consists of 2 alpha, 1 beta, 1 beta' and 1 omega subunit. When a sigma factor is associated with the core the holoenzyme is formed, which can initiate transcription. Mg(2+) is required as a cofactor. Requires Zn(2+) as cofactor.

The catalysed reaction is RNA(n) + a ribonucleoside 5'-triphosphate = RNA(n+1) + diphosphate. Its function is as follows. DNA-dependent RNA polymerase catalyzes the transcription of DNA into RNA using the four ribonucleoside triphosphates as substrates. This chain is DNA-directed RNA polymerase subunit beta', found in Lactococcus lactis subsp. lactis (strain IL1403) (Streptococcus lactis).